Reading from the N-terminus, the 1980-residue chain is Sodium channel protein type 8 subunit alpha (1980 aa).

Disordered stretches follow at residues 1–20 and 28–62; these read MAAR…FTPE and RIAE…LEAG. The Cytoplasmic portion of the chain corresponds to 1–132; the sequence is MAARLLAPPG…RIAIKILIHS (132 aa). Basic and acidic residues predominate over residues 28–61; that stretch reads RIAESKLKKPPKADGSHREDDEDSKPKPNSDLEA. One copy of the I repeat lies at 114–442; the sequence is ILSPFNLIRR…KAMLEQLKKQ (329 aa). The chain crosses the membrane as a helical span at residues 133-151; that stretch reads VFSMIIMCTILTNCVFMTF. Over 152–158 the chain is Extracellular; the sequence is SNPPDWS. A helical transmembrane segment spans residues 159 to 179; it reads KNVEYTFTGIYTFESLVKIIA. At 180-193 the chain is on the cytoplasmic side; it reads RGFCIDGFTFLRDP. Residues 194–211 traverse the membrane as a helical segment; the sequence is WNWLDFSVIMMAYITEFV. Topologically, residues 212 to 217 are extracellular; it reads NLGNVS. N-linked (GlcNAc...) asparagine glycosylation occurs at asparagine 215. The chain crosses the membrane as a helical span at residues 218–234; that stretch reads ALRTFRVLRALKTISVI. Residues 235 to 253 are Cytoplasmic-facing; the sequence is PGLKTIVGALIQSVKKLSD. The helical transmembrane segment at 254 to 273 threads the bilayer; it reads VMILTVFCLSVFALIGLQLF. Over 274–355 the chain is Extracellular; sequence MGNLRNKCVV…PNYGYTSFDT (82 aa). Cysteine 281 and cysteine 333 are disulfide-bonded. Residues asparagine 289, asparagine 295, and asparagine 308 are each glycosylated (N-linked (GlcNAc...) asparagine). N-linked (GlcNAc...) (high mannose) asparagine glycosylation occurs at asparagine 326. The segment at residues 356–380 is an intramembrane region (pore-forming); it reads FSWAFLALFRLMTQDYWENLYQLTL. Na(+) is bound at residue glutamate 373. At 381–387 the chain is on the extracellular side; the sequence is RAAGKTY. A helical transmembrane segment spans residues 388-408; sequence MIFFVLVIFVGSFYLVNLILA. The Cytoplasmic portion of the chain corresponds to 409 to 753; sequence VVAMAYEEQN…EIVNLIVMDP (345 aa). 2 disordered regions span residues 446 to 530 and 568 to 602; these read AQAA…KAFR and FRGP…DSLF. The segment covering 474 to 486 has biased composition (low complexity); the sequence is PRSSSEISKLSSK. The segment covering 489 to 500 has biased composition (basic residues); that stretch reads KERRNRRKKRKQ. 2 stretches are compositionally biased toward basic and acidic residues: residues 501 to 530 and 586 to 602; these read KELS…KAFR and DEHS…DSLF. Phosphoserine is present on residues serine 518 and serine 520. The stretch at 735 to 1007 is one II repeat; the sequence is CHPYWIKLKE…QISVIRIKKG (273 aa). Residues 754–772 traverse the membrane as a helical segment; sequence FVDLAITICIVLNTLFMAM. At 773–783 the chain is on the extracellular side; it reads EHHPMTPQFEH. Residues 784–803 traverse the membrane as a helical segment; it reads VLAVGNLVFTGIFTAEMFLK. Residues 804-817 lie on the Cytoplasmic side of the membrane; that stretch reads LIAMDPYYYFQEGW. Residues 818–837 form a helical membrane-spanning segment; that stretch reads NIFDGFIVSLSLMELSLADV. Over 838–839 the chain is Extracellular; the sequence is EG. The chain crosses the membrane as a helical span at residues 840-857; the sequence is LSVLRSFRLLRVFKLAKS. Topologically, residues 858-873 are cytoplasmic; sequence WPTLNMLIKIIGNSVG. The chain crosses the membrane as a helical span at residues 874–892; sequence ALGNLTLVLAIIVFIFAVV. Topologically, residues 893 to 921 are extracellular; it reads GMQLFGKSYKECVCKINQDCELPRWHMHD. A disulfide bridge connects residues cysteine 906 and cysteine 912. Residues 922-942 constitute an intramembrane region (pore-forming); the sequence is FFHSFLIVFRVLCGEWIETMW. Positions 936 and 939 each coordinate Na(+). At 943 to 955 the chain is on the extracellular side; it reads DCMEVAGQAMCLI. A disulfide bridge connects residues cysteine 944 and cysteine 953. Residues 956 to 976 traverse the membrane as a helical segment; that stretch reads VFMMVMVIGNLVVLNLFLALL. The Cytoplasmic segment spans residues 977-1199; the sequence is LSSFSADNLA…TCFLIVEHNW (223 aa). Residues 1107-1148 are disordered; it reads NLNTEDVSSESDPEGSKDKLDDTSSSEGSTIDIKPEVEEVPV. The III repeat unit spans residues 1180–1495; the sequence is LGKSWWILRK…KKYYNAMKKL (316 aa). The chain crosses the membrane as a helical span at residues 1200–1217; it reads FETFIIFMILLSSGALAF. Over 1218–1230 the chain is Extracellular; that stretch reads EDIYIEQRKTIRT. The helical transmembrane segment at 1231 to 1249 threads the bilayer; the sequence is ILEYADKVFTYIFILEMLL. Over 1250 to 1263 the chain is Cytoplasmic; the sequence is KWTAYGFVKFFTNA. Residues 1264–1282 form a helical membrane-spanning segment; that stretch reads WCWLDFLIVAVSLVSLIAN. Over 1283–1290 the chain is Extracellular; that stretch reads ALGYSELG. A helical transmembrane segment spans residues 1291-1309; it reads AIKSLRTLRALRPLRALSR. Over 1310–1326 the chain is Cytoplasmic; the sequence is FEGMRVVVNALVGAIPS. A helical transmembrane segment spans residues 1327–1346; the sequence is IMNVLLVCLIFWLIFSIMGV. At 1347–1399 the chain is on the extracellular side; the sequence is NLFAGKYHYCFNETSEIRFEIEDVNNKTECEKLMEGNNTEIRWKNVKINFDNV. A disulfide bridge links cysteine 1356 with cysteine 1376. 3 N-linked (GlcNAc...) asparagine glycosylation sites follow: asparagine 1358, asparagine 1372, and asparagine 1383. Positions 1400–1421 form an intramembrane region, pore-forming; the sequence is GAGYLALLQVATFKGWMDIMYA. Over 1422–1438 the chain is Extracellular; sequence AVDSRKPDEQPKYEDNI. The helical transmembrane segment at 1439–1460 threads the bilayer; that stretch reads YMYIYFVIFIIFGSFFTLNLFI. Over 1461–1523 the chain is Cytoplasmic; the sequence is GVIIDNFNQQ…IVFDFVTQQA (63 aa). Serine 1497 is subject to Phosphoserine; by PKC. One copy of the IV repeat lies at 1504–1801; that stretch reads IPRPLNKIQG…WEKFDPDATQ (298 aa). Residues 1524-1541 form a helical membrane-spanning segment; sequence FDIVIMMLICLNMVTMMV. The Extracellular segment spans residues 1542-1552; it reads ETDTQSKQMEN. Residues 1553–1571 traverse the membrane as a helical segment; the sequence is ILYWINLVFVIFFTCECVL. The Cytoplasmic segment spans residues 1572-1583; the sequence is KMFALRHYYFTI. Residues 1584–1601 traverse the membrane as a helical segment; it reads GWNIFDFVVVILSIVGMF. Over 1602-1614 the chain is Extracellular; the sequence is LADIIEKYFVSPT. The helical transmembrane segment at 1615–1631 threads the bilayer; it reads LFRVIRLARIGRILRLI. Residues 1632 to 1650 lie on the Cytoplasmic side of the membrane; that stretch reads KGAKGIRTLLFALMMSLPA. A helical membrane pass occupies residues 1651–1668; the sequence is LFNIGLLLFLVMFIFSIF. At 1669–1690 the chain is on the extracellular side; the sequence is GMSNFAYVKHEAGIDDMFNFET. The segment at residues 1691–1713 is an intramembrane region (pore-forming); it reads FGNSMICLFQITTSAGWDGLLLP. At 1714–1742 the chain is on the extracellular side; the sequence is ILNRPPDCSLDKEHPGSGFKGDCGNPSVG. An intrachain disulfide couples cysteine 1721 to cysteine 1736. A helical transmembrane segment spans residues 1743–1765; the sequence is IFFFVSYIIISFLIVVNMYIAII. The Cytoplasmic portion of the chain corresponds to 1766-1980; the sequence is LENFSVATEE…RQKEVRESKC (215 aa). An IQ domain is found at 1895–1924; that stretch reads EEVSAVVLQRAYRGHLARRGFICKKTTSNK. A disordered region spans residues 1922 to 1980; it reads SNKLENGGTHREKKESTPSTASLPSYDSVTKPEKEKQQRAEEGRRERAKRQKEVRESKC. Residues 1938 to 1949 are compositionally biased toward polar residues; sequence TPSTASLPSYDS. The span at 1951–1980 shows a compositional bias: basic and acidic residues; sequence TKPEKEKQQRAEEGRRERAKRQKEVRESKC.

It belongs to the sodium channel (TC 1.A.1.10) family. Nav1.6/SCN8A subfamily. As to quaternary structure, the voltage-sensitive sodium channel consists of an ion-conducting pore-forming alpha subunit regulated by one or more beta-1 (SCN1B), beta-2 (SCN2B), beta-3 (SCN3B) and/or beta-4 (SCN4B) subunits. Beta-1 (SCN1B) and beta-3 (SCN3B) are non-covalently associated with alpha, while beta-2 (SCN2B) and beta-4 (SCN4B) are covalently linked by disulfide bonds. Interacts with NEDD4 and NEDD4L. Interacts with FGF13. Interacts with FGF14, GBG3, GBB2 and SCN1B. Interacts with TMEM233. Interacts with the conotoxin GVIIJ. Interacts with the spider beta/delta-theraphotoxin-Pre1a. Interacts with CALM1; the interaction modulates the inactivation rate of SCN8A. May be ubiquitinated by NEDD4L; which would promote its endocytosis. In terms of processing, phosphorylation at Ser-1497 by PKC in a highly conserved cytoplasmic loop slows inactivation of the sodium channel and reduces peak sodium currents. In terms of tissue distribution, expressed in the hippocampus with increased expression in epileptic tissue compared to normal adjacent tissue (at protein level). Expressed in non-neuronal tissues, such as monocytes/macrophages.

The protein localises to the cell membrane. Its subcellular location is the cell projection. It localises to the axon. The protein resides in the cytoplasmic vesicle. It is found in the podosome. It carries out the reaction Na(+)(in) = Na(+)(out). With respect to regulation, inhibited by tetrodotoxin and, more weakly, by its metabolite 4,9-ah-tetrodotoxin. Its function is as follows. Pore-forming subunit of a voltage-gated sodium channel complex assuming opened or closed conformations in response to the voltage difference across membranes and through which sodium ions selectively pass along their electrochemical gradient. Contributes to neuronal excitability by regulating action potential threshold and propagation. More specifically expressed in non-neuronal cells, could play a role in sodium release from intracellular compartments and participate in the control of podosomes formation and macrophages adhesion and movement. The chain is Sodium channel protein type 8 subunit alpha from Homo sapiens (Human).